The primary structure comprises 574 residues: Sulfite reductase [NADPH] hemoprotein beta-component (574 aa).

[4Fe-4S] cluster contacts are provided by C439, C445, C484, and C488. Residue C488 participates in siroheme binding.

This sequence belongs to the nitrite and sulfite reductase 4Fe-4S domain family. Alpha(8)-beta(8). The alpha component is a flavoprotein, the beta component is a hemoprotein. Requires siroheme as cofactor. [4Fe-4S] cluster is required as a cofactor.

The enzyme catalyses hydrogen sulfide + 3 NADP(+) + 3 H2O = sulfite + 3 NADPH + 4 H(+). The protein operates within sulfur metabolism; hydrogen sulfide biosynthesis; hydrogen sulfide from sulfite (NADPH route): step 1/1. In terms of biological role, component of the sulfite reductase complex that catalyzes the 6-electron reduction of sulfite to sulfide. This is one of several activities required for the biosynthesis of L-cysteine from sulfate. This Paenibacillus sp. (strain JDR-2) protein is Sulfite reductase [NADPH] hemoprotein beta-component.